The sequence spans 719 residues: DNA ligase (719 aa).

Residues 42–46 (DAAYD), 92–93 (SL), and Glu126 each bind NAD(+). Catalysis depends on Lys128, which acts as the N6-AMP-lysine intermediate. The NAD(+) site is built by Arg149, Glu185, Lys301, and Lys325. Residues Cys430, Cys433, Cys448, and Cys454 each contribute to the Zn(2+) site. Residues 640–719 (ATGSPVEGKT…DDWFKLVGED (80 aa)) form the BRCT domain.

It belongs to the NAD-dependent DNA ligase family. LigA subfamily. Mg(2+) is required as a cofactor. Requires Mn(2+) as cofactor.

It carries out the reaction NAD(+) + (deoxyribonucleotide)n-3'-hydroxyl + 5'-phospho-(deoxyribonucleotide)m = (deoxyribonucleotide)n+m + AMP + beta-nicotinamide D-nucleotide.. Its function is as follows. DNA ligase that catalyzes the formation of phosphodiester linkages between 5'-phosphoryl and 3'-hydroxyl groups in double-stranded DNA using NAD as a coenzyme and as the energy source for the reaction. It is essential for DNA replication and repair of damaged DNA. The polypeptide is DNA ligase (Brucella ovis (strain ATCC 25840 / 63/290 / NCTC 10512)).